A 389-amino-acid chain; its full sequence is Protein Wnt-10b (389 aa).

The first 28 residues, 1 to 28, serve as a signal peptide directing secretion; it reads MLEEPRPRPPPSGLAGLLFLALCSRALS. T46 carries the post-translational modification Phosphothreonine. 11 cysteine pairs are disulfide-bonded: C83/C94, C136/C144, C146/C199, C247/C261, C249/C256, C318/C349, C334/C344, C348/C388, C364/C379, C366/C376, and C371/C372. Residue N93 is glycosylated (N-linked (GlcNAc...) asparagine). Positions 171 to 197 are disordered; sequence KSFPHSLPSPGPGSSPSPGPQDTWEWG. Positions 177 to 189 are enriched in pro residues; it reads LPSPGPGSSPSPG. A lipid anchor (O-palmitoleoyl serine; by PORCN) is attached at S253. An N-linked (GlcNAc...) asparagine glycan is attached at N335.

This sequence belongs to the Wnt family. In terms of assembly, forms a soluble 1:1 complex with AFM; this prevents oligomerization and is required for prolonged biological activity. The complex with AFM may represent the physiological form in body fluids. Palmitoleoylation is required for efficient binding to frizzled receptors. Depalmitoleoylation leads to Wnt signaling pathway inhibition. Detected in most adult tissues. Highest levels were found in heart and skeletal muscle. Low levels are found in brain.

It localises to the secreted. The protein localises to the extracellular space. It is found in the extracellular matrix. In terms of biological role, member of the Wnt ligand gene family that encodes for secreted proteins, which activate the Wnt signaling cascade. Specifically activates canonical Wnt/beta-catenin signaling and thus triggers beta-catenin/LEF/TCF-mediated transcriptional programs. Involved in signaling networks controlling stemness, pluripotency and cell fate decisions. Acts in the immune system, mammary gland, adipose tissue, bone and skin. The polypeptide is Protein Wnt-10b (WNT10B) (Homo sapiens (Human)).